The sequence spans 245 residues: 1-(5-phosphoribosyl)-5-[(5-phosphoribosylamino)methylideneamino] imidazole-4-carboxamide isomerase (245 aa).

Asp10 functions as the Proton acceptor in the catalytic mechanism. Asp135 functions as the Proton donor in the catalytic mechanism.

The protein belongs to the HisA/HisF family.

It localises to the cytoplasm. The enzyme catalyses 1-(5-phospho-beta-D-ribosyl)-5-[(5-phospho-beta-D-ribosylamino)methylideneamino]imidazole-4-carboxamide = 5-[(5-phospho-1-deoxy-D-ribulos-1-ylimino)methylamino]-1-(5-phospho-beta-D-ribosyl)imidazole-4-carboxamide. Its pathway is amino-acid biosynthesis; L-histidine biosynthesis; L-histidine from 5-phospho-alpha-D-ribose 1-diphosphate: step 4/9. The chain is 1-(5-phosphoribosyl)-5-[(5-phosphoribosylamino)methylideneamino] imidazole-4-carboxamide isomerase from Methanosarcina barkeri (strain Fusaro / DSM 804).